The following is a 210-amino-acid chain: Casparian strip membrane protein 1 (210 aa).

The disordered stretch occupies residues 1 to 25; sequence MEKSEATTIDVAETSRESKGKAPLL. The Cytoplasmic segment spans residues 1–48; sequence MEKSEATTIDVAETSRESKGKAPLLRDPPAWVPAAVERQRAAPAYKRG. A helical membrane pass occupies residues 49–69; the sequence is VAIFDLILRISAATAALAATI. Over 70–98 the chain is Extracellular; it reads TMGTTEQTLPFFTQFFQFQASYDDLPTFT. A helical membrane pass occupies residues 99–119; the sequence is FFVIAMSIVTGYLVLSVPFSI. Residues 120–138 lie on the Cytoplasmic side of the membrane; the sequence is VCIARPVAAAPRLLLILCD. The helical transmembrane segment at 139–159 threads the bilayer; the sequence is TLAVTLNTSAAGASAAIVYLA. Over 160–183 the chain is Extracellular; sequence HNGNSDANWLAICQQFNDFCQRTS. The helical transmembrane segment at 184-204 threads the bilayer; that stretch reads GAVVASFVAVVLLIFLVVLSA. Residues 205 to 210 lie on the Cytoplasmic side of the membrane; it reads SALKKH.

The protein belongs to the Casparian strip membrane proteins (CASP) family. In terms of assembly, homodimer and heterodimers.

It localises to the cell membrane. Regulates membrane-cell wall junctions and localized cell wall deposition. Required for establishment of the Casparian strip membrane domain (CSD) and the subsequent formation of Casparian strips, a cell wall modification of the root endodermis that determines an apoplastic barrier between the intraorganismal apoplasm and the extraorganismal apoplasm and prevents lateral diffusion. This is Casparian strip membrane protein 1 from Erythranthe guttata (Yellow monkey flower).